Here is a 474-residue protein sequence, read N- to C-terminus: Probable aspartate--tRNA ligase, cytoplasmic (474 aa).

Glu203 provides a ligand contact to L-aspartate. Residues 225–228 (QLYK) are aspartate. Arg247 is a binding site for L-aspartate. ATP contacts are provided by residues 247 to 249 (RAE), 255 to 257 (RYL), and Glu397. 2 residues coordinate L-aspartate: Ser400 and Arg404. 445 to 448 (GLER) contributes to the ATP binding site.

The protein belongs to the class-II aminoacyl-tRNA synthetase family. Type 2 subfamily. In terms of assembly, homodimer.

It localises to the cytoplasm. The catalysed reaction is tRNA(Asp) + L-aspartate + ATP = L-aspartyl-tRNA(Asp) + AMP + diphosphate. The protein is Probable aspartate--tRNA ligase, cytoplasmic of Enterocytozoon bieneusi (strain H348) (Microsporidian parasite).